The chain runs to 73 residues: uncharacterized protein (73 aa).

Residues 48–73 form a disordered region; it reads AKEPEKKTPSMEAKATSLSPNKASAS. The span at 63–73 shows a compositional bias: polar residues; it reads TSLSPNKASAS.

This is an uncharacterized protein from Saccharomyces cerevisiae (strain ATCC 204508 / S288c) (Baker's yeast).